Reading from the N-terminus, the 60-residue chain is Truncated protein A35 homolog (60 aa).

This sequence belongs to the chordopoxvirinae A35 protein family.

This Variola virus (isolate Human/India/Ind3/1967) (VARV) protein is Truncated protein A35 homolog (A38R).